The sequence spans 279 residues: Plasmodesmata-located protein 8 (279 aa).

Positions 1 to 20 (MRRLFLFSLLFLFFYSSSSS) are cleaved as a signal peptide. Over 21-253 (RSSSESHIFI…PTNGDHVGKS (233 aa)) the chain is Extracellular. 2 Gnk2-homologous domains span residues 27–135 (HIFI…TNDF) and 137–237 (GKPD…GSGY). 6 disulfides stabilise this stretch: cysteine 34/cysteine 113, cysteine 89/cysteine 98, cysteine 101/cysteine 126, cysteine 148/cysteine 215, cysteine 191/cysteine 200, and cysteine 203/cysteine 228. The chain crosses the membrane as a helical span at residues 254–274 (IAIIVGVIAGFAILVVLLSLC). Positions 254–274 (IAIIVGVIAGFAILVVLLSLC) are necessary and sufficient for plasmodesmal targeting. Residues 275 to 279 (RNSMH) are Cytoplasmic-facing.

This sequence belongs to the cysteine-rich repeat secretory protein family. Plasmodesmata-located proteins (PDLD) subfamily. In terms of assembly, interacts with ACBP6; interaction occurs at the plasma membrane. As to quaternary structure, (Microbial infection) Interacts with Grapevine fanleaf virus (GFLV) 2B-MP. In terms of tissue distribution, highly expressed in pollen, lateral root and elongation zone. Higher expression in the reproductive tissues (flowers and buds) than in vegetative organs (leaves and stems). High expression in shoot and root phloem companion cells (at protein level).

It is found in the cell membrane. Its subcellular location is the cell junction. The protein resides in the plasmodesma. Its function is as follows. Modulates cell-to-cell trafficking. The sequence is that of Plasmodesmata-located protein 8 from Arabidopsis thaliana (Mouse-ear cress).